A 381-amino-acid polypeptide reads, in one-letter code: MYINYLKDLISFKSVTPKSDGAIEYINDLLKQHGFKTEIKIFGDSKSEQVTNLYAVFGSNEPNICFVGHVDVVLEGNHELWHNASPFKVSQQDGKIYGRGAVDMKGAIACFLAASLDFIKNNTDFKGSISFLLTSDEEGKAKHGTKEMLQYIYDQGYKINFAIVGEPTCEKEIGDAIKIGRRGSVNFKLNIEGLSGHVAYPHKANNPLPCLIIILNELTNIKLDEGTEFFQRSNLEVTNIEVSNNTSNVIPASTEASFNIRFNNLHSAETLAKQVEEIIKQHCKEYKVDYKLEYSSSAESFIQNPSDKIKEFAKVVEHTLKIKPEFSTSGGTSDARFVKNYCPLVEFGLLSETAHKINEYTKISDLQKLYDVYYNFLMEIL.

Residue H69 participates in Zn(2+) binding. Residue D71 is part of the active site. D103 is a Zn(2+) binding site. E137 (proton acceptor) is an active-site residue. Positions 138, 166, and 355 each coordinate Zn(2+).

Belongs to the peptidase M20A family. DapE subfamily. In terms of assembly, homodimer. Zn(2+) serves as cofactor. Requires Co(2+) as cofactor.

The enzyme catalyses N-succinyl-(2S,6S)-2,6-diaminopimelate + H2O = (2S,6S)-2,6-diaminopimelate + succinate. It participates in amino-acid biosynthesis; L-lysine biosynthesis via DAP pathway; LL-2,6-diaminopimelate from (S)-tetrahydrodipicolinate (succinylase route): step 3/3. Functionally, catalyzes the hydrolysis of N-succinyl-L,L-diaminopimelic acid (SDAP), forming succinate and LL-2,6-diaminopimelate (DAP), an intermediate involved in the bacterial biosynthesis of lysine and meso-diaminopimelic acid, an essential component of bacterial cell walls. This Rickettsia rickettsii (strain Iowa) protein is Succinyl-diaminopimelate desuccinylase.